Here is a 101-residue protein sequence, read N- to C-terminus: MTQESTMNDIYPLAALLIYATNQKVTKEKISSVFKFLGLESHPKICEFFEVDAVEIKKLLMSSTQEAAAPAGPQEPAEASGDAGKKEEVEEEEIEIDFGMF.

Low complexity predominate over residues 65–79 (QEAAAPAGPQEPAEA). The disordered stretch occupies residues 65–101 (QEAAAPAGPQEPAEASGDAGKKEEVEEEEIEIDFGMF). Over residues 89-101 (VEEEEIEIDFGMF) the composition is skewed to acidic residues.

This is an uncharacterized protein from Encephalitozoon cuniculi (strain GB-M1) (Microsporidian parasite).